A 176-amino-acid polypeptide reads, in one-letter code: Probable chemoreceptor glutamine deamidase CheD (176 aa).

The protein belongs to the CheD family.

The catalysed reaction is L-glutaminyl-[protein] + H2O = L-glutamyl-[protein] + NH4(+). Functionally, probably deamidates glutamine residues to glutamate on methyl-accepting chemotaxis receptors (MCPs), playing an important role in chemotaxis. The polypeptide is Probable chemoreceptor glutamine deamidase CheD (Rhodospirillum rubrum (strain ATCC 11170 / ATH 1.1.1 / DSM 467 / LMG 4362 / NCIMB 8255 / S1)).